The following is an 89-amino-acid chain: MNSQQQKQPCTPPPQPQQQQVKQPCQPPPQEPCIPKTKEPCHPKVPEPCHPKVPEPCQPKVPEPCQPKVPEPCPSTVTPAPAQQKTKQK.

Residues 1-29 are disordered; it reads MNSQQQKQPCTPPPQPQQQQVKQPCQPPP. A run of 8 repeats spans residues 3-14, 18-29, 31-38, 39-46, 47-54, 55-62, 63-70, and 71-78. The 2 X 12 AA approximate repeats stretch occupies residues 3–29; the sequence is SQQQKQPCTPPPQPQQQQVKQPCQPPP. The interval 31–78 is 6 X 8 AA approximate tandem repeats; the sequence is EPCIPKTKEPCHPKVPEPCHPKVPEPCQPKVPEPCQPKVPEPCPSTVT. Residues 68–89 are disordered; the sequence is KVPEPCPSTVTPAPAQQKTKQK. Residues 75–89 are compositionally biased toward polar residues; it reads STVTPAPAQQKTKQK.

This sequence belongs to the cornifin (SPRR) family.

It is found in the cytoplasm. Functionally, cross-linked envelope protein of keratinocytes. It is a keratinocyte protein that first appears in the cell cytosol, but ultimately becomes cross-linked to membrane proteins by transglutaminase. All that results in the formation of an insoluble envelope beneath the plasma membrane. The chain is Cornifin-A (SPRR1A) from Homo sapiens (Human).